A 63-amino-acid polypeptide reads, in one-letter code: MRCLAFLVVTLLLFTATATTGASNGMNAAASGEAPDSISLAVRDDCCPDPACRQNHPELCSTR.

Positions 1-21 (MRCLAFLVVTLLLFTATATTG) are cleaved as a signal peptide. Residues 22-43 (ASNGMNAAASGEAPDSISLAVR) constitute a propeptide that is removed on maturation. 2 cysteine pairs are disulfide-bonded: Cys-46/Cys-52 and Cys-47/Cys-60. The lacks the Ser-Xaa-Pro motif that is crucial for potent interaction with nAChR stretch occupies residues 48–50 (PDP).

The protein belongs to the conotoxin A superfamily. Expressed by the salivary gland.

Its subcellular location is the secreted. Functionally, alpha-conopeptides-like may act on postsynaptic membranes, they bind to the nicotinic acetylcholine receptors (nAChR) and thus inhibit them. Has possibly a distinct nAChR binding mode from other alpha-conotoxins, due to a different three residue motif (lacks the Ser-Xaa-Pro motif). The chain is Alpha-conotoxin-like PuSG1.1 from Conus pulicarius (Flea-bitten cone).